The primary structure comprises 624 residues: DNA-directed RNA polymerase subunit gamma (624 aa).

4 residues coordinate Zn(2+): Cys70, Cys72, Cys85, and Cys88. Mg(2+) contacts are provided by Asp466, Asp468, and Asp470.

This sequence belongs to the RNA polymerase beta' chain family. RpoC1 subfamily. In cyanobacteria the RNAP catalytic core is composed of 2 alpha, 1 beta, 1 beta', 1 gamma and 1 omega subunit. When a sigma factor is associated with the core the holoenzyme is formed, which can initiate transcription. It depends on Mg(2+) as a cofactor. Zn(2+) serves as cofactor.

It catalyses the reaction RNA(n) + a ribonucleoside 5'-triphosphate = RNA(n+1) + diphosphate. Its function is as follows. DNA-dependent RNA polymerase catalyzes the transcription of DNA into RNA using the four ribonucleoside triphosphates as substrates. This Synechococcus elongatus (strain ATCC 33912 / PCC 7942 / FACHB-805) (Anacystis nidulans R2) protein is DNA-directed RNA polymerase subunit gamma.